Here is a 157-residue protein sequence, read N- to C-terminus: Deoxyuridine 5'-triphosphate nucleotidohydrolase (157 aa).

Residues S63, G76, D79, Y82, K87, R132, F137, and G138 each coordinate dUMP. The segment at 125-157 (NDLESTERGAGGFGSTGINDEKKRKLDEAEAKE) is disordered. Basic and acidic residues predominate over residues 143–157 (NDEKKRKLDEAEAKE).

This sequence belongs to the dUTPase family. As to quaternary structure, homotrimer. The cofactor is Mg(2+).

It catalyses the reaction dUTP + H2O = dUMP + diphosphate + H(+). The protein operates within pyrimidine metabolism; dUMP biosynthesis; dUMP from dCTP (dUTP route): step 2/2. Its function is as follows. Involved in nucleotide metabolism via production of dUMP, the immediate precursor of thymidine nucleotides, and decreases the intracellular concentration of dUTP so that uracil cannot be incorporated into DNA. The polypeptide is Deoxyuridine 5'-triphosphate nucleotidohydrolase (DUT1) (Yarrowia lipolytica (strain CLIB 122 / E 150) (Yeast)).